We begin with the raw amino-acid sequence, 249 residues long: Indole-3-glycerol phosphate synthase (249 aa).

This sequence belongs to the TrpC family.

The catalysed reaction is 1-(2-carboxyphenylamino)-1-deoxy-D-ribulose 5-phosphate + H(+) = (1S,2R)-1-C-(indol-3-yl)glycerol 3-phosphate + CO2 + H2O. Its pathway is amino-acid biosynthesis; L-tryptophan biosynthesis; L-tryptophan from chorismate: step 4/5. This Pyrobaculum neutrophilum (strain DSM 2338 / JCM 9278 / NBRC 100436 / V24Sta) (Thermoproteus neutrophilus) protein is Indole-3-glycerol phosphate synthase.